The chain runs to 363 residues: MIPFLDLRQINMRYQKEIQQAMNRVLESGWYILGGEVDDFERKFASYCGAKYCIGVANGLDALTLIIRAYDIGLGDEVIVPSNTYIASILAISANGATPVLVEPDINTYNIDPLKIEEKITSRTKAIMVVHLYGQSCDMESINLIAKKYNLKVIEDCAQAHGAIYNGKRVGSLGDAAGFSFYPGKNLGALGDGGAITTNDAELAERLNVLRNYGSHKKYENLFKGVNSRLDELQAAILSIKLSYLDDDNQRRREIAAYYLEHIKNPFIHLPTVTDDKAHVWHLFVVRVKEREAFQYYLAEQNIQTLIHYPIPPHKQKAYSEWQQESFPISEQIHSEVVSLPISPVMSREEVERVVEAVNRYGY.

Position 185 is an N6-(pyridoxal phosphate)lysine (Lys185).

The protein belongs to the DegT/DnrJ/EryC1 family. Requires pyridoxal 5'-phosphate as cofactor.

The catalysed reaction is dTDP-3-amino-3,6-dideoxy-alpha-D-galactopyranose + 2-oxoglutarate = dTDP-3-dehydro-6-deoxy-alpha-D-galactose + L-glutamate. Its function is as follows. Specifically aminates dTDP-6-deoxy-D-xylohex-3-ulose to form dTDP-D-Fucp3N in the biosynthesis of dTDP-3-acetamido-3,6-dideoxy-alpha-D-galactose, a glycan chain of the S-layer. In Aneurinibacillus thermoaerophilus, this protein is dTDP-3-amino-3,6-dideoxy-alpha-D-galactopyranose transaminase (fdtB).